The chain runs to 516 residues: Multicopper oxidase CueO (516 aa).

Positions 1 to 28 (MQRRDFLKYSVALGVASALPLWSRAVFA) form a signal peptide, tat-type signal. 3 consecutive Plastocyanin-like domains span residues 55 to 165 (GQST…IEDD), 227 to 292 (PRGW…DNKP), and 399 to 516 (GGKF…GFTV). 4 residues coordinate Cu cation: His-101, His-103, His-141, and His-143. Positions 443, 446, 448, 499, 500, 501, and 505 each coordinate Cu cation.

It belongs to the multicopper oxidase family. In terms of assembly, monomer. It depends on Cu cation as a cofactor. In terms of processing, predicted to be exported by the Tat system. The position of the signal peptide cleavage has not been experimentally proven.

The protein resides in the periplasm. It carries out the reaction 4 Cu(+) + O2 + 4 H(+) = 4 Cu(2+) + 2 H2O. Multicopper oxidase involved in copper homeostasis and copper tolerance under aerobic conditions. Is responsible for the oxidation of Cu(+) to the less harmful Cu(2+) in the periplasm, thereby preventing Cu(+) from entering the cytoplasm. The chain is Multicopper oxidase CueO (cueO) from Escherichia coli O157:H7.